A 187-amino-acid chain; its full sequence is UPF0340 protein SGO_0411 (187 aa).

The protein belongs to the UPF0340 family.

The chain is UPF0340 protein SGO_0411 from Streptococcus gordonii (strain Challis / ATCC 35105 / BCRC 15272 / CH1 / DL1 / V288).